A 799-amino-acid chain; its full sequence is Probable inorganic carbon transporter subunit DabA (799 aa).

Zn(2+) is bound by residues Cys303, Asp305, His479, and Cys494. Residues 574-598 (AGAAAERSEALNGADPDKGVSETAS) form a disordered region.

It belongs to the inorganic carbon transporter (TC 9.A.2) DabA family. In terms of assembly, forms a complex with DabB. It depends on Zn(2+) as a cofactor.

It is found in the cell membrane. Part of an energy-coupled inorganic carbon pump. In Natronomonas pharaonis (strain ATCC 35678 / DSM 2160 / CIP 103997 / JCM 8858 / NBRC 14720 / NCIMB 2260 / Gabara) (Halobacterium pharaonis), this protein is Probable inorganic carbon transporter subunit DabA.